The primary structure comprises 176 residues: Ribosome rescue factor SmrB (176 aa).

Positions 93–168 constitute a Smr domain; the sequence is LDLHGYRQSE…GDAALLVLID (76 aa).

This sequence belongs to the SmrB family. As to quaternary structure, associates with collided ribosomes, but not with correctly translating polysomes.

In terms of biological role, acts as a ribosome collision sensor. Detects stalled/collided disomes (pairs of ribosomes where the leading ribosome is stalled and a second ribosome has collided with it) and endonucleolytically cleaves mRNA at the 5' boundary of the stalled ribosome. Stalled/collided disomes form a new interface (primarily via the 30S subunits) that binds SmrB. Cleaved mRNA becomes available for tmRNA ligation, leading to ribosomal subunit dissociation and rescue of stalled ribosomes. This Shewanella sp. (strain ANA-3) protein is Ribosome rescue factor SmrB.